The following is a 469-amino-acid chain: ATP synthase subunit beta (469 aa).

156 to 163 (GGAGVGKT) provides a ligand contact to ATP.

This sequence belongs to the ATPase alpha/beta chains family. As to quaternary structure, F-type ATPases have 2 components, CF(1) - the catalytic core - and CF(0) - the membrane proton channel. CF(1) has five subunits: alpha(3), beta(3), gamma(1), delta(1), epsilon(1). CF(0) has three main subunits: a(1), b(2) and c(9-12). The alpha and beta chains form an alternating ring which encloses part of the gamma chain. CF(1) is attached to CF(0) by a central stalk formed by the gamma and epsilon chains, while a peripheral stalk is formed by the delta and b chains.

The protein resides in the cell membrane. It carries out the reaction ATP + H2O + 4 H(+)(in) = ADP + phosphate + 5 H(+)(out). Functionally, produces ATP from ADP in the presence of a proton gradient across the membrane. The catalytic sites are hosted primarily by the beta subunits. The protein is ATP synthase subunit beta of Bacillus anthracis (strain CDC 684 / NRRL 3495).